Consider the following 1686-residue polypeptide: Thrombospondin type-1 domain-containing protein 7A (1686 aa).

The first 36 residues, 1–36, serve as a signal peptide directing secretion; that stretch reads MGLASRAPGKGGTSAGALASLFRVALLFFGLWDVQT. Residues 37–1635 lie on the Extracellular side of the membrane; sequence QTVANTRPTY…FGPDGKLKTW (1599 aa). TSP type-1 domains are found at residues 44 to 103, 107 to 181, and 183 to 236; these read PTYI…RVCD, ELYD…IPCP, and DCVV…GKCE. N-linked (GlcNAc...) asparagine glycosylation occurs at asparagine 223. Residues 257-321 form a disordered region; that stretch reads IRQARDTGEA…EKKRMRDPET (65 aa). Composition is skewed to basic and acidic residues over residues 259–272 and 294–321; these read QARDTGEARVPKAE and EKKELRESKGERVRERVKEKKRMRDPET. TSP type-1 domains lie at 385-441, 448-535, 537-596, 656-717, 718-797, 799-859, 860-932, 934-985, 988-1061, 1063-1123, 1124-1191, 1193-1247, 1248-1311, 1313-1368, 1369-1439, and 1441-1502; these read DCEV…SPQG, VVYN…IPCP, ECEV…PSCY, DCVL…HPCT, VYHW…LPCK, DCVV…SVCP, GYRW…LPCQ, DCQL…QYCP, KYNA…IPCP, DCKL…SDCS, QYVW…LPCP, DCVL…SNCF, HYSY…VECP, NCQL…KPCF, SWRY…VPCP, and ECYL…GQCY. Disulfide bonds link cysteine 460-cysteine 530, cysteine 480-cysteine 534, and cysteine 491-cysteine 519. The N-linked (GlcNAc...) asparagine glycan is linked to asparagine 475. Residue asparagine 525 is glycosylated (N-linked (GlcNAc...) asparagine). 2 disulfides stabilise this stretch: cysteine 657–cysteine 699 and cysteine 668–cysteine 672. A glycan (N-linked (GlcNAc...) asparagine) is linked at asparagine 701. Cystine bridges form between cysteine 711-cysteine 716, cysteine 729-cysteine 792, cysteine 756-cysteine 796, cysteine 767-cysteine 780, cysteine 800-cysteine 842, cysteine 811-cysteine 815, and cysteine 852-cysteine 858. N-linked (GlcNAc...) asparagine glycosylation occurs at asparagine 739. N-linked (GlcNAc...) asparagine glycosylation is present at asparagine 996. 6 cysteine pairs are disulfide-bonded: cysteine 1000-cysteine 1056, cysteine 1022-cysteine 1060, cysteine 1033-cysteine 1046, cysteine 1064-cysteine 1101, cysteine 1075-cysteine 1079, and cysteine 1118-cysteine 1122. A glycan (N-linked (GlcNAc...) asparagine) is linked at asparagine 1071. N-linked (GlcNAc...) asparagine glycosylation occurs at asparagine 1212. Cysteine 1240 and cysteine 1246 are oxidised to a cystine. N-linked (GlcNAc...) asparagine glycosylation is present at asparagine 1252. Cystine bridges form between cysteine 1259-cysteine 1306, cysteine 1267-cysteine 1310, cysteine 1278-cysteine 1291, cysteine 1314-cysteine 1352, cysteine 1325-cysteine 1329, cysteine 1362-cysteine 1367, cysteine 1378-cysteine 1434, cysteine 1385-cysteine 1438, cysteine 1396-cysteine 1415, cysteine 1442-cysteine 1486, cysteine 1453-cysteine 1457, and cysteine 1496-cysteine 1501. Asparagine 1303 carries N-linked (GlcNAc...) asparagine glycosylation. An N-linked (GlcNAc...) asparagine glycan is attached at asparagine 1393. Asparagine 1527 carries N-linked (GlcNAc...) asparagine glycosylation. Residues 1636–1656 form a helical membrane-spanning segment; that stretch reads VYGVAAGAFVLLVFIVSMTYL. Residues 1657–1686 are Cytoplasmic-facing; the sequence is ACKKPKKPQRRQMNNRLKPLTLAYDGDADM.

Extensively N-glycosylated.

It localises to the cell membrane. Its subcellular location is the cell projection. Functionally, required for normal sprouting angiogenesis and normal embryonic development of intersegmental vessels (ISV). Required for normal function of the glomerular filtration barrier. Required for normal axon outgrowth on embryonic motor neurons at the level of the horizontal myoseptum. Required for normal expression of notch1b, suggesting that its functions in angiogenesis and neuron outgrowth are due to decreased expression of notch1b. Plays a role in actin cytoskeleton rearrangement. This chain is Thrombospondin type-1 domain-containing protein 7A, found in Danio rerio (Zebrafish).